The primary structure comprises 310 residues: Nucleotide-binding protein Ddes_0972 (310 aa).

30-37 is a binding site for ATP; the sequence is GLSGAGKS. 82-85 provides a ligand contact to GTP; that stretch reads DLRQ.

The protein belongs to the RapZ-like family.

Functionally, displays ATPase and GTPase activities. The chain is Nucleotide-binding protein Ddes_0972 from Desulfovibrio desulfuricans (strain ATCC 27774 / DSM 6949 / MB).